The primary structure comprises 126 residues: Fluoride-specific ion channel FluC (126 aa).

Helical transmembrane passes span 4–24 (LLLV…TSAW), 36–56 (GTLL…TASL), 67–85 (LFLA…SFNY), and 101–121 (AYLL…TLLV). 2 residues coordinate Na(+): Gly75 and Thr78.

This sequence belongs to the fluoride channel Fluc/FEX (TC 1.A.43) family.

The protein localises to the cell inner membrane. The catalysed reaction is fluoride(in) = fluoride(out). With respect to regulation, na(+) is not transported, but it plays an essential structural role and its presence is essential for fluoride channel function. Functionally, fluoride-specific ion channel. Important for reducing fluoride concentration in the cell, thus reducing its toxicity. The chain is Fluoride-specific ion channel FluC from Anaeromyxobacter sp. (strain K).